We begin with the raw amino-acid sequence, 404 residues long: G-protein coupled receptor 143 (404 aa).

Residues 1–28 (MASPRLGTFCCPTRDAATQLVLSFQPRA) are Extracellular-facing. Residues 29-49 (FHALCLGSGGLRLALGLLQLL) form a helical membrane-spanning segment. The Cytoplasmic segment spans residues 50 to 78 (PGRRPAGPGSPATSPPASVRILRAAAACD). Residues 79–99 (LLGCLGMVIRSTVWLGFPNFV) form a helical membrane-spanning segment. The Extracellular portion of the chain corresponds to 100–124 (DSVSDMNHTEIWPAAFCVGSAMWIQ). N-linked (GlcNAc...) asparagine glycosylation occurs at N106. The helical transmembrane segment at 125–145 (LLYSACFWWLFCYAVDAYLVI) threads the bilayer. The Cytoplasmic segment spans residues 146–149 (RRSA). Residues 150 to 170 (GLSTILLYHIMAWGLATLLCV) traverse the membrane as a helical segment. The Extracellular portion of the chain corresponds to 171-191 (EGAAMLYYPSVSRCERGLDHA). Residues 192 to 212 (IPHYVTMYLPLLLVLVANPIL) form a helical membrane-spanning segment. At 213–248 (FQKTVTAVASLLKGRQGIYTENERRMGAVIKIRFFK) the chain is on the cytoplasmic side. The segment at 221–238 (ASLLKGRQGIYTENERRM) is necessary for its G protein-activation ability and normal distribution of melanosomes. The lysosomal/melanosomal membrane localization signal motif lies at 222–231 (SLLKGRQGIY). Residues 249 to 269 (IMLVLIICWLSNIINESLLFY) traverse the membrane as a helical segment. At 270–292 (LEMQTDINGGSLKPVRTAAKTTW) the chain is on the extracellular side. The helical transmembrane segment at 293–313 (FIMGILNPAQGFLLSLAFYGW) threads the bilayer. Topologically, residues 314 to 404 (TGCSLGFQSP…DPALPTHGDL (91 aa)) are cytoplasmic. A lysosomal/melanosomal membrane localization signal motif is present at residues 329–330 (WE). Positions 338–404 (EGAHPSPLMP…DPALPTHGDL (67 aa)) are disordered. Polar residues predominate over residues 355–366 (KVSQVGGQTSDE).

Belongs to the G-protein coupled receptor OA family. As to quaternary structure, interacts with heterotrimeric G(i) proteins. Interacts with ARRB1 and ARRB2. Interacts with MLANA. In terms of processing, glycosylated. Phosphorylated. Expressed at high levels in the retina, including the retinal pigment epithelium (RPE), and in melanocytes. Weak expression is observed in brain and adrenal gland.

Its subcellular location is the melanosome membrane. It is found in the lysosome membrane. The protein resides in the apical cell membrane. Receptor for tyrosine, L-DOPA and dopamine. After binding to L-DOPA, stimulates Ca(2+) influx into the cytoplasm, increases secretion of the neurotrophic factor SERPINF1 and relocalizes beta arrestin at the plasma membrane; this ligand-dependent signaling occurs through a G(q)-mediated pathway in melanocytic cells. Its activity is mediated by G proteins which activate the phosphoinositide signaling pathway. Also plays a role as an intracellular G protein-coupled receptor involved in melanosome biogenesis, organization and transport. In Homo sapiens (Human), this protein is G-protein coupled receptor 143 (GPR143).